Reading from the N-terminus, the 538-residue chain is Eukaryotic translation initiation factor 3 subunit L (538 aa).

In terms of domain architecture, PCI spans 305–513; sequence TFSDILLYIQ…IHIADTKVSH (209 aa).

Belongs to the eIF-3 subunit L family. As to quaternary structure, component of the eukaryotic translation initiation factor 3 (eIF-3) complex. The eIF-3 complex interacts with pix.

The protein localises to the cytoplasm. Functionally, component of the eukaryotic translation initiation factor 3 (eIF-3) complex, which is involved in protein synthesis of a specialized repertoire of mRNAs and, together with other initiation factors, stimulates binding of mRNA and methionyl-tRNAi to the 40S ribosome. The eIF-3 complex specifically targets and initiates translation of a subset of mRNAs involved in cell proliferation. This Drosophila virilis (Fruit fly) protein is Eukaryotic translation initiation factor 3 subunit L.